We begin with the raw amino-acid sequence, 373 residues long: Cytoplasmic tRNA 2-thiolation protein 1 (373 aa).

The protein belongs to the TtcA family. CTU1/NCS6/ATPBD3 subfamily.

The protein localises to the cytoplasm. It functions in the pathway tRNA modification; 5-methoxycarbonylmethyl-2-thiouridine-tRNA biosynthesis. In terms of biological role, plays a central role in 2-thiolation of mcm(5)S(2)U at tRNA wobble positions of tRNA(Lys), tRNA(Glu) and tRNA(Gln). Directly binds tRNAs and probably acts by catalyzing adenylation of tRNAs, an intermediate required for 2-thiolation. It is unclear whether it acts as a sulfurtransferase that transfers sulfur from thiocarboxylated URM1 onto the uridine of tRNAs at wobble position. The protein is Cytoplasmic tRNA 2-thiolation protein 1 of Caenorhabditis elegans.